We begin with the raw amino-acid sequence, 168 residues long: Nicotinamide-nucleotide adenylyltransferase (168 aa).

Belongs to the archaeal NMN adenylyltransferase family.

It is found in the cytoplasm. It carries out the reaction beta-nicotinamide D-ribonucleotide + ATP + H(+) = diphosphate + NAD(+). Its pathway is cofactor biosynthesis; NAD(+) biosynthesis; NAD(+) from nicotinamide D-ribonucleotide: step 1/1. The protein is Nicotinamide-nucleotide adenylyltransferase of Methanosphaerula palustris (strain ATCC BAA-1556 / DSM 19958 / E1-9c).